A 350-amino-acid polypeptide reads, in one-letter code: Protein RecA (350 aa).

ATP is bound at residue Gly66–Thr73.

This sequence belongs to the RecA family.

The protein localises to the cytoplasm. Functionally, can catalyze the hydrolysis of ATP in the presence of single-stranded DNA, the ATP-dependent uptake of single-stranded DNA by duplex DNA, and the ATP-dependent hybridization of homologous single-stranded DNAs. It interacts with LexA causing its activation and leading to its autocatalytic cleavage. In Dichelobacter nodosus (strain VCS1703A), this protein is Protein RecA.